The following is a 484-amino-acid chain: Sperm motility kinase 1 (484 aa).

Positions 8–256 (YEMLETIGQG…VAEVMVHPWI (249 aa)) constitute a Protein kinase domain. ATP is bound by residues 14–22 (IGQGGCAKV) and Lys37. Residue Asp127 is the Proton acceptor of the active site. One can recognise a UBA domain in the interval 274-314 (KPDPAIVKPMGHIGFQAQDIEDSLRQRKFNETMASYCLLKK). Positions 423–434 (IDESTEGHTSAS) are enriched in polar residues. The segment at 423–447 (IDESTEGHTSASAEDKPVHSRGWPR) is disordered.

This sequence belongs to the protein kinase superfamily. Tyr protein kinase family. Smok subfamily. As to expression, testis-specific. Expressed in the testis from 22 days postpartum (22 dpp).

It carries out the reaction L-seryl-[protein] + ATP = O-phospho-L-seryl-[protein] + ADP + H(+). The catalysed reaction is L-threonyl-[protein] + ATP = O-phospho-L-threonyl-[protein] + ADP + H(+). Its function is as follows. May play a role in sperm motility, especially in the regulation of flagellar function. This Mus musculus (Mouse) protein is Sperm motility kinase 1 (Smok1).